A 433-amino-acid polypeptide reads, in one-letter code: Evolutionarily conserved signaling intermediate in Toll pathway, mitochondrial (433 aa).

Residues 1–48 (MSWAQAILLARGASRGWGGICSTALTGAPFSQVPPQAPRGLRCSAAAH) constitute a mitochondrion transit peptide. Residues 36–63 (QAPRGLRCSAAAHNPDSSLVPHPPEPPR) are disordered. Lysine 372 participates in a covalent cross-link: Glycyl lysine isopeptide (Lys-Gly) (interchain with G-Cter in ubiquitin). The segment at 397–433 (SGELLPSSSELEEPPPPPPEGQEEEEDSQQRQQQGQS) is disordered.

It belongs to the ECSIT family. In terms of assembly, interacts with MAP3K1, SMAD4 and TRAF6. Interacts with SMAD1 only after BMP4-treatment. Part of the mitochondrial complex I assembly/MCIA complex that comprises at least the core subunits TMEM126B, NDUFAF1, ECSIT and ACAD9 and complement subunits such as COA1 and TMEM186. Interacts with NDUFAF1. Interacts with ACAD9. Interacts with TRIM59. Interacts with TMEM70 and TMEM242. Interacts (when ubiquitinated) with NF-kappa-B subunits RELA and NFKB1. Interacts with RIGI, IFIT1 and MAVS; these interactions promote RLR-mediated type I IFN induction. Interacts with SQSTM1; this interaction inhibits TLR4 signaling via functional regulation of the TRAF6-ECSIT complex. Interacts with cereblon/CRBN; this interaction inhibits the ubiquitination of ECSIT. In terms of processing, ubiquitinated on Lys-372; leading to translocation in the nucleus together with RELA and NFKB1 and expression of NF-kappa-B-dependent genes.

The protein resides in the cytoplasm. The protein localises to the nucleus. It is found in the mitochondrion. In terms of biological role, adapter protein that plays a role in different signaling pathways including TLRs and IL-1 pathways or innate antiviral induction signaling. Plays a role in the activation of NF-kappa-B by forming a signal complex with TRAF6 and TAK1/MAP3K7 to activate TAK1/MAP3K7 leading to activation of IKKs. Once ubiquitinated, interacts with the dissociated RELA and NFKB1 proteins and translocates to the nucleus where it induces NF-kappa-B-dependent gene expression. Plays a role in innate antiviral immune response by bridging the pattern recognition receptors RIGI and MDA5/IFIT1 to the MAVS complex at the mitochondrion. Promotes proteolytic activation of MAP3K1. Involved in the BMP signaling pathway. Required for normal embryonic development. Functionally, as part of the MCIA complex, involved in the assembly of the mitochondrial complex I. This is Evolutionarily conserved signaling intermediate in Toll pathway, mitochondrial from Bos taurus (Bovine).